Reading from the N-terminus, the 436-residue chain is Protein 60A (436 aa).

The signal sequence occupies residues 1-27; that stretch reads MTASLVVLPSLWLILIIFTAPYTHCTQ. Residues 28 to 317 constitute a propeptide that is removed on maturation; it reads SGIYIDNGKD…STLHQRKKSK (290 aa). Residues N102, N114, N217, and N229 are each glycosylated (N-linked (GlcNAc...) asparagine). Residues 293-322 form a disordered region; the sequence is IKSTSGHSTQKRTKRSTLHQRKKSKSEPVN. Positions 301 to 316 are enriched in basic residues; that stretch reads TQKRTKRSTLHQRKKS. Disulfide bonds link C335–C401, C364–C433, and C368–C435. The N-linked (GlcNAc...) asparagine glycan is linked to N377.

The protein belongs to the TGF-beta family. As to quaternary structure, homodimer; disulfide-linked.

The protein resides in the secreted. The sequence is that of Protein 60A (gbb) from Drosophila virilis (Fruit fly).